We begin with the raw amino-acid sequence, 385 residues long: Cytochrome b (385 aa).

A run of 4 helical transmembrane segments spans residues 32–52 (FGAL…FLAM), 76–98 (WLIR…IHVF), 113–133 (LWNL…LGYV), and 179–199 (FFSL…IHVA). Heme b-binding residues include histidine 82 and histidine 96. Histidine 183 and histidine 197 together coordinate heme b. Position 202 (histidine 202) interacts with a ubiquinone. 4 helical membrane-spanning segments follow: residues 226–246 (FIFK…YAVF), 290–310 (LGGV…PFIT), 322–342 (SKTI…WIGF), and 349–369 (YLML…SLAV).

This sequence belongs to the cytochrome b family. The main subunits of complex b-c1 are: cytochrome b, cytochrome c1 and the Rieske protein. Heme b serves as cofactor.

It is found in the mitochondrion inner membrane. In terms of biological role, component of the ubiquinol-cytochrome c reductase complex (complex III or cytochrome b-c1 complex) that is part of the mitochondrial respiratory chain. The b-c1 complex mediates electron transfer from ubiquinol to cytochrome c. Contributes to the generation of a proton gradient across the mitochondrial membrane that is then used for ATP synthesis. The protein is Cytochrome b (MT-CYB) of Acanthamoeba castellanii (Amoeba).